The sequence spans 386 residues: MKLSDEDLSRLNEFWLYCSKNQYFNVGYPESADFDYSELEKFMKFSINNCGDWREESNYKLNSFDFEKDVMRYFSQLFNIPHQESWGYISNGGTEGNLFSCYLARELFPTAYLYYSEETHYSVDKIARLLNIPSRKIPALSNGEIDYQQLVTQIERDQQGNPIIFANIGSTMRGAIDDIGRIQNDLATLGLDRKDYYIHADAALSGMILPFVDQPPPYSFQDGIDSITVSGHKMIGSPIPCGIVLAKQHMVDQISVEVDYISSRDQTISGSRNGHSALFMWTAIKSHSLSDWQSKVKLCLDMADYTVQRLQKAGIEAWRNKNSNTVVFPCPSEPIWRKHSLATSGDVAHIVTMPHLNSTAQLDALIDDVIFDLSPEYGLGHVIGQN.

Residue His120 coordinates substrate. Residue Lys233 is modified to N6-(pyridoxal phosphate)lysine.

The protein belongs to the group II decarboxylase family. In terms of assembly, homotetramer. The cofactor is pyridoxal 5'-phosphate.

It catalyses the reaction L-histidine + H(+) = histamine + CO2. The chain is Histidine decarboxylase from Vibrio campbellii (strain ATCC BAA-1116).